A 150-amino-acid polypeptide reads, in one-letter code: SsrA-binding protein (150 aa).

Positions 130-150 are disordered; that stretch reads DKRESLKEKDDRREMDRMFKR.

The protein belongs to the SmpB family.

Its subcellular location is the cytoplasm. Its function is as follows. Required for rescue of stalled ribosomes mediated by trans-translation. Binds to transfer-messenger RNA (tmRNA), required for stable association of tmRNA with ribosomes. tmRNA and SmpB together mimic tRNA shape, replacing the anticodon stem-loop with SmpB. tmRNA is encoded by the ssrA gene; the 2 termini fold to resemble tRNA(Ala) and it encodes a 'tag peptide', a short internal open reading frame. During trans-translation Ala-aminoacylated tmRNA acts like a tRNA, entering the A-site of stalled ribosomes, displacing the stalled mRNA. The ribosome then switches to translate the ORF on the tmRNA; the nascent peptide is terminated with the 'tag peptide' encoded by the tmRNA and targeted for degradation. The ribosome is freed to recommence translation, which seems to be the essential function of trans-translation. This Phocaeicola vulgatus (strain ATCC 8482 / DSM 1447 / JCM 5826 / CCUG 4940 / NBRC 14291 / NCTC 11154) (Bacteroides vulgatus) protein is SsrA-binding protein.